We begin with the raw amino-acid sequence, 33 residues long: Brevinin-2Eb (33 aa).

Cysteines 27 and 33 form a disulfide.

This sequence belongs to the frog skin active peptide (FSAP) family. Brevinin subfamily. As to expression, expressed by the skin glands.

Its subcellular location is the secreted. In terms of biological role, shows antibacterial activity against representative Gram-negative and Gram-positive bacterial species, and hemolytic activity. The protein is Brevinin-2Eb of Pelophylax lessonae (Pool frog).